The sequence spans 128 residues: Ribosome-binding factor A (128 aa).

This sequence belongs to the RbfA family. In terms of assembly, monomer. Binds 30S ribosomal subunits, but not 50S ribosomal subunits or 70S ribosomes.

The protein resides in the cytoplasm. Functionally, one of several proteins that assist in the late maturation steps of the functional core of the 30S ribosomal subunit. Associates with free 30S ribosomal subunits (but not with 30S subunits that are part of 70S ribosomes or polysomes). Required for efficient processing of 16S rRNA. May interact with the 5'-terminal helix region of 16S rRNA. This is Ribosome-binding factor A from Pseudomonas paraeruginosa (strain DSM 24068 / PA7) (Pseudomonas aeruginosa (strain PA7)).